Reading from the N-terminus, the 64-residue chain is MERRTLLVVLLVCSCVVAAAAEASPSRWPSPGRPRPFPGRPKPIFRPRPCNCYAPPCPCDRWRH.

The signal sequence occupies residues 1 to 25; it reads MERRTLLVVLLVCSCVVAAAAEASP. A disordered region spans residues 22–43; it reads EASPSRWPSPGRPRPFPGRPKP. The segment at 26 to 48 is pro/Arg-rich region responsible for antibacterial and antifungal activity; it reads SRWPSPGRPRPFPGRPKPIFRPR. The segment covering 31–43 has biased composition (pro residues); the sequence is PGRPRPFPGRPKP. The interval 49–62 is cystein-containing C-terminal region important for stability but not essential for antimicrobial activity; it reads PCNCYAPPCPCDRW. 2 cysteine pairs are disulfide-bonded: Cys50–Cys59 and Cys52–Cys57. Positions 63-64 are excised as a propeptide; that stretch reads RH.

Interacts with chitin through the N-terminal region (26-48). This interaction may be important, since chitin is a component of the fungal cell wall, as well as of the crab exoskeleton (permitting a possible action of arasin in wound healing in case of lesions). Disulfide bonds are important for activity especially against Gram-negative bacteria, since the linearization of the peptide causes a strong decrease of activity on these bacteria. In terms of tissue distribution, mainly expressed in hemocytes. No or very low expression in heart, gills, inestines, and epidermis.

Functionally, antimicrobial peptide that has a large activity spectrum with activity against Gram-positive, Gram-negative bacteria, as well as against fungi. Shows activity at micromolar concentrations. Displays minimal inhibitory concentration (MIC) values lower than minimal bactericidal concentrations (MBC). Synthetic peptides with similar activities than the full length peptide (composed of the first 23 or 25 amino acids (Arasin 1(26-48) or Arasin 1(26-50))) may have a dual mode of action depending on the peptide concentrations. At MIC concentrations, the peptide penetrates into the cytoplasm of target cells (tested on the Gram-negative E.coli). The two inner membrane proteins YgdD and SbmA may be required for this uptake. At concentrations higher than MIC, arasin may act by disrupting membranes. Full-length and N-terminal peptides do not show hemolytic activity. The polypeptide is Arasin 1 (Hyas araneus (Atlantic lyre crab)).